We begin with the raw amino-acid sequence, 383 residues long: tRNA(Met) cytidine acetate ligase (383 aa).

Residues 7–20, Gly-102, Asn-160, and 181–182 each bind ATP; these read ISEY…HLYQ and RI.

The protein belongs to the TmcAL family.

The protein resides in the cytoplasm. The enzyme catalyses cytidine(34) in elongator tRNA(Met) + acetate + ATP = N(4)-acetylcytidine(34) in elongator tRNA(Met) + AMP + diphosphate. Functionally, catalyzes the formation of N(4)-acetylcytidine (ac(4)C) at the wobble position of elongator tRNA(Met), using acetate and ATP as substrates. First activates an acetate ion to form acetyladenylate (Ac-AMP) and then transfers the acetyl group to tRNA to form ac(4)C34. This Exiguobacterium sibiricum (strain DSM 17290 / CCUG 55495 / CIP 109462 / JCM 13490 / 255-15) protein is tRNA(Met) cytidine acetate ligase.